The sequence spans 206 residues: Small ribosomal subunit protein uS4 (206 aa).

One can recognise an S4 RNA-binding domain in the interval 96–156 (SRLDNVVYRM…EKSKKQVRIA (61 aa)).

Belongs to the universal ribosomal protein uS4 family. As to quaternary structure, part of the 30S ribosomal subunit. Contacts protein S5. The interaction surface between S4 and S5 is involved in control of translational fidelity.

In terms of biological role, one of the primary rRNA binding proteins, it binds directly to 16S rRNA where it nucleates assembly of the body of the 30S subunit. Functionally, with S5 and S12 plays an important role in translational accuracy. This is Small ribosomal subunit protein uS4 from Laribacter hongkongensis (strain HLHK9).